The following is a 345-amino-acid chain: Phosphoribosylformylglycinamidine cyclo-ligase (345 aa).

This sequence belongs to the AIR synthase family.

Its subcellular location is the cytoplasm. The catalysed reaction is 2-formamido-N(1)-(5-O-phospho-beta-D-ribosyl)acetamidine + ATP = 5-amino-1-(5-phospho-beta-D-ribosyl)imidazole + ADP + phosphate + H(+). It participates in purine metabolism; IMP biosynthesis via de novo pathway; 5-amino-1-(5-phospho-D-ribosyl)imidazole from N(2)-formyl-N(1)-(5-phospho-D-ribosyl)glycinamide: step 2/2. In Enterobacter sp. (strain 638), this protein is Phosphoribosylformylglycinamidine cyclo-ligase.